The chain runs to 250 residues: Proteasome subunit alpha type-7 (250 aa).

The protein belongs to the peptidase T1A family. As to quaternary structure, the 26S proteasome consists of a 20S proteasome core and two 19S regulatory subunits. The 20S proteasome core is composed of 28 subunits that are arranged in four stacked rings, resulting in a barrel-shaped structure. The two end rings are each formed by seven alpha subunits, and the two central rings are each formed by seven beta subunits. The catalytic chamber with the active sites is on the inside of the barrel.

The protein localises to the cytoplasm. It localises to the nucleus. Functionally, the proteasome is a multicatalytic proteinase complex which is characterized by its ability to cleave peptides with Arg, Phe, Tyr, Leu, and Glu adjacent to the leaving group at neutral or slightly basic pH. The proteasome has an ATP-dependent proteolytic activity. In Dictyostelium discoideum (Social amoeba), this protein is Proteasome subunit alpha type-7 (psmA7).